Reading from the N-terminus, the 441-residue chain is N-acetyl-S-(2-succino)cysteine monooxygenase (441 aa).

Residues Asp-59, Thr-96, His-146, Tyr-150, Ser-220, and Ser-221 each contribute to the FMN site.

The protein belongs to the NtaA/SnaA/DszA monooxygenase family. Homodimer. Requires FMN as cofactor.

It carries out the reaction N-acetyl-S-(2-succino)-L-cysteine + NADH + O2 + H(+) = N-acetyl-L-cysteine + oxaloacetate + NAD(+) + H2O. It functions in the pathway amino-acid biosynthesis; L-cysteine biosynthesis. Its function is as follows. Catalyzes the oxidative cleavage of the C-S bond of N-acetyl-S-(2-succino)cysteine, forming oxaloacetate and N-acetylcysteine (NAC). Is involved in a S-(2-succino)cysteine (2SC) degradation pathway that allows B.subtilis to grow on 2SC as a sole sulfur source, via its metabolization to cysteine. Shows almost no activity on S-succinylglutathione and 2SC. This Bacillus subtilis (strain 168) protein is N-acetyl-S-(2-succino)cysteine monooxygenase.